The primary structure comprises 157 residues: UPF0254 protein MTH_1148 (157 aa).

It belongs to the UPF0254 family.

This Methanothermobacter thermautotrophicus (strain ATCC 29096 / DSM 1053 / JCM 10044 / NBRC 100330 / Delta H) (Methanobacterium thermoautotrophicum) protein is UPF0254 protein MTH_1148.